The following is a 374-amino-acid chain: MSIEQLARKTVRELTPYQSARRLGGSGDIWLNANESPFANEYSVTCGRLNRYSECQPADLIQAYADYAGIDSKQVLTSRGADEGIELLIRTFCEPNQDSILYCPPTYGMYAISAETFDIKTKTVPLTPEWQLDLPSIQNNLDGVKLVFVCSPNNPTGNVMNRRDIEKLLDMTTDKALVVIDEAYIDFCLETSTVDLLAKYPHLVILRTLSKAFALAGLRCGFTLANTDVINLLLKVIAPYPVPVPVADIAVQALSVAGRARTKFQVLDISANRAYLQAGLGMLSGVTVYDGYGNYLLVKFTHADALFTALWNHGIILRRSPIENCIRISVGNRDECEKTLAFIRAHVTSQGNSSQDSASKSNSSANNDELNASN.

Lys211 is modified (N6-(pyridoxal phosphate)lysine). Low complexity predominate over residues 351–368; that stretch reads GNSSQDSASKSNSSANND. Positions 351–374 are disordered; the sequence is GNSSQDSASKSNSSANNDELNASN.

Belongs to the class-II pyridoxal-phosphate-dependent aminotransferase family. Histidinol-phosphate aminotransferase subfamily. As to quaternary structure, homodimer. It depends on pyridoxal 5'-phosphate as a cofactor.

It carries out the reaction L-histidinol phosphate + 2-oxoglutarate = 3-(imidazol-4-yl)-2-oxopropyl phosphate + L-glutamate. Its pathway is amino-acid biosynthesis; L-histidine biosynthesis; L-histidine from 5-phospho-alpha-D-ribose 1-diphosphate: step 7/9. The polypeptide is Histidinol-phosphate aminotransferase (Photobacterium profundum (strain SS9)).